A 226-amino-acid chain; its full sequence is MVKLGCSFSGKPGKETGDQDGAAMDSVPLISPLDVSQLQPSFPDQVVIKTQTEYQLTSADQPKKFADLEGQRLACSHPEEGRRLPTARMIAFAMALLGCVLIMYKAIWYDQFTCPDGFLLRHKICTPLTLEMYYTEMDPERHRSILAAIGAYPLSRKHGTEMPAIWGNSYRAGKEEHKGTTPAAMTVSTAAAAAAAEGNEPSGKPLDMREKEDPQKAEDVPSQSPK.

The tract at residues 1–23 (MVKLGCSFSGKPGKETGDQDGAA) is disordered. Over 1–88 (MVKLGCSFSG…EEGRRLPTAR (88 aa)) the chain is Extracellular. Residues 89–109 (MIAFAMALLGCVLIMYKAIWY) traverse the membrane as a helical segment. The Cytoplasmic portion of the chain corresponds to 110 to 226 (DQFTCPDGFL…AEDVPSQSPK (117 aa)). Residues 189–226 (TAAAAAAAEGNEPSGKPLDMREKEDPQKAEDVPSQSPK) are disordered. Basic and acidic residues predominate over residues 206–219 (LDMREKEDPQKAED).

Belongs to the NSG family. Interacts with CLTA. In terms of tissue distribution, expressed exclusively in neurons (at protein level). In all age groups, expressed at significantly higher levels in the medial prefrontal and orbital frontal cortices of spontaneously hypertensive rats (SHR), a model of attention deficit-hyperactivity disorder, than Wistar Kyoto (WKY) animals. In the motor cortex, dorsal striatum and nucleus accumbens, expression is significantly elevated in SHR only in younger animals.

It is found in the cytoplasmic vesicle membrane. The protein localises to the cell membrane. Functionally, interacts with clathrin light chain A and stimulates clathrin self-assembly and clathrin-mediated endocytosis. The polypeptide is Neuron-specific vesicular protein calcyon (Caly) (Rattus norvegicus (Rat)).